The chain runs to 270 residues: Glucosamine-6-phosphate deaminase (270 aa).

The active-site Proton acceptor; for enolization step is Asp68. The active-site For ring-opening step is Asp145. His147 functions as the Proton acceptor; for ring-opening step in the catalytic mechanism. Glu152 serves as the catalytic For ring-opening step.

It belongs to the glucosamine/galactosamine-6-phosphate isomerase family. NagB subfamily.

It carries out the reaction alpha-D-glucosamine 6-phosphate + H2O = beta-D-fructose 6-phosphate + NH4(+). Its pathway is amino-sugar metabolism; N-acetylneuraminate degradation; D-fructose 6-phosphate from N-acetylneuraminate: step 5/5. In terms of biological role, catalyzes the reversible isomerization-deamination of glucosamine 6-phosphate (GlcN6P) to form fructose 6-phosphate (Fru6P) and ammonium ion. The chain is Glucosamine-6-phosphate deaminase from Bifidobacterium longum (strain NCC 2705).